The primary structure comprises 572 residues: Urease subunit alpha (572 aa).

In terms of domain architecture, Urease spans 136–572 (GGIDTHIHFI…VPLGQRYFLF (437 aa)). Ni(2+)-binding residues include histidine 141, histidine 143, and lysine 224. Lysine 224 carries the post-translational modification N6-carboxylysine. Histidine 226 contributes to the substrate binding site. 2 residues coordinate Ni(2+): histidine 253 and histidine 279. Histidine 327 acts as the Proton donor in catalysis. Position 367 (aspartate 367) interacts with Ni(2+).

It belongs to the metallo-dependent hydrolases superfamily. Urease alpha subunit family. Heterotrimer of UreA (gamma), UreB (beta) and UreC (alpha) subunits. Three heterotrimers associate to form the active enzyme. It depends on Ni cation as a cofactor. Post-translationally, carboxylation allows a single lysine to coordinate two nickel ions.

The protein localises to the cytoplasm. It carries out the reaction urea + 2 H2O + H(+) = hydrogencarbonate + 2 NH4(+). It participates in nitrogen metabolism; urea degradation; CO(2) and NH(3) from urea (urease route): step 1/1. The protein is Urease subunit alpha of Haemophilus influenzae (strain PittGG).